Here is a 142-residue protein sequence, read N- to C-terminus: Profilin (142 aa).

The protein belongs to the profilin family. As to quaternary structure, occurs in many kinds of cells as a complex with monomeric actin in a 1:1 ratio. Expressed specifically in coelomocytes in response to injury.

Its subcellular location is the cytoplasm. It localises to the cytoskeleton. Functionally, binds to actin and affects the structure of the cytoskeleton. At high concentrations, profilin prevents the polymerization of actin, whereas it enhances it at low concentrations. By binding to PIP2, it inhibits the formation of IP3 and DG. The sequence is that of Profilin from Strongylocentrotus purpuratus (Purple sea urchin).